Consider the following 163-residue polypeptide: Large ribosomal subunit protein uL10 (163 aa).

This sequence belongs to the universal ribosomal protein uL10 family. Part of the ribosomal stalk of the 50S ribosomal subunit. The N-terminus interacts with L11 and the large rRNA to form the base of the stalk. The C-terminus forms an elongated spine to which L12 dimers bind in a sequential fashion forming a multimeric L10(L12)X complex.

Functionally, forms part of the ribosomal stalk, playing a central role in the interaction of the ribosome with GTP-bound translation factors. The sequence is that of Large ribosomal subunit protein uL10 from Haemophilus influenzae (strain 86-028NP).